Here is a 177-residue protein sequence, read N- to C-terminus: Alkyl hydroperoxide reductase AhpD (177 aa).

Cysteine 131 serves as the catalytic Proton donor. Cysteine 131 and cysteine 134 are disulfide-bonded. Cysteine 134 (cysteine sulfenic acid (-SOH) intermediate) is an active-site residue.

This sequence belongs to the AhpD family.

The enzyme catalyses N(6)-[(R)-dihydrolipoyl]-L-lysyl-[lipoyl-carrier protein] + a hydroperoxide = N(6)-[(R)-lipoyl]-L-lysyl-[lipoyl-carrier protein] + an alcohol + H2O. Its function is as follows. Antioxidant protein with alkyl hydroperoxidase activity. Required for the reduction of the AhpC active site cysteine residues and for the regeneration of the AhpC enzyme activity. This Solibacter usitatus (strain Ellin6076) protein is Alkyl hydroperoxide reductase AhpD.